Reading from the N-terminus, the 253-residue chain is Probable transcriptional regulatory protein RBE_0568 (253 aa).

The interval 1 to 21 is disordered; that stretch reads MAGHSKFKNIQHRKGAQDKKR.

This sequence belongs to the TACO1 family.

The protein localises to the cytoplasm. The polypeptide is Probable transcriptional regulatory protein RBE_0568 (Rickettsia bellii (strain RML369-C)).